Consider the following 83-residue polypeptide: Cytochrome b559 subunit alpha (83 aa).

Residues 21–35 traverse the membrane as a helical segment; that stretch reads VIHSITIPSLFIAGW. Position 23 (H23) interacts with heme.

Belongs to the PsbE/PsbF family. Heterodimer of an alpha subunit and a beta subunit. PSII is composed of 1 copy each of membrane proteins PsbA, PsbB, PsbC, PsbD, PsbE, PsbF, PsbH, PsbI, PsbJ, PsbK, PsbL, PsbM, PsbT, PsbX, PsbY, PsbZ, Psb30/Ycf12, at least 3 peripheral proteins of the oxygen-evolving complex and a large number of cofactors. It forms dimeric complexes. It depends on heme b as a cofactor.

The protein resides in the plastid. It localises to the chloroplast thylakoid membrane. In terms of biological role, this b-type cytochrome is tightly associated with the reaction center of photosystem II (PSII). PSII is a light-driven water:plastoquinone oxidoreductase that uses light energy to abstract electrons from H(2)O, generating O(2) and a proton gradient subsequently used for ATP formation. It consists of a core antenna complex that captures photons, and an electron transfer chain that converts photonic excitation into a charge separation. The sequence is that of Cytochrome b559 subunit alpha from Tupiella akineta (Green alga).